Here is a 512-residue protein sequence, read N- to C-terminus: GMP synthase [glutamine-hydrolyzing] (512 aa).

A Glutamine amidotransferase type-1 domain is found at 7–197; it reads TIIVLDFGSQ…VFGVCGCSEG (191 aa). Catalysis depends on C84, which acts as the Nucleophile. Active-site residues include H171 and E173. The 190-residue stretch at 198–387 folds into the GMPS ATP-PPase domain; sequence WNMENFIEVE…LGIPDEIVWR (190 aa). Position 225 to 231 (225 to 231) interacts with ATP; the sequence is SGGVDSS.

In terms of assembly, homodimer.

The catalysed reaction is XMP + L-glutamine + ATP + H2O = GMP + L-glutamate + AMP + diphosphate + 2 H(+). It participates in purine metabolism; GMP biosynthesis; GMP from XMP (L-Gln route): step 1/1. In terms of biological role, catalyzes the synthesis of GMP from XMP. The chain is GMP synthase [glutamine-hydrolyzing] from Bacillus cereus (strain ATCC 10987 / NRS 248).